The primary structure comprises 553 residues: Serine/threonine-protein phosphatase 2B catalytic subunit A1 (553 aa).

Ser-2 carries the N-acetylserine modification. Fe cation is bound by residues Asp-119, His-121, and Asp-147. Asp-147 and Asn-179 together coordinate Zn(2+). The active-site Proton donor is His-180. Zn(2+) is bound by residues His-228 and His-317. The disordered stretch occupies residues 413-447; the sequence is LDPESEPKAAEETVKARANATKETGTPSDEKASSA. The span at 417 to 427 shows a compositional bias: basic and acidic residues; that stretch reads SEPKAAEETVK.

Belongs to the PPP phosphatase family. PP-2B subfamily. In terms of assembly, composed of two components (A and B), the A component is the catalytic subunit and the B component confers calcium sensitivity. Fe(3+) is required as a cofactor. The cofactor is Zn(2+).

The enzyme catalyses O-phospho-L-seryl-[protein] + H2O = L-seryl-[protein] + phosphate. It catalyses the reaction O-phospho-L-threonyl-[protein] + H2O = L-threonyl-[protein] + phosphate. Its function is as follows. Calcium-dependent, calmodulin-stimulated protein phosphatase. This subunit may have a role in the calmodulin activation of calcineurin. In Saccharomyces cerevisiae (strain ATCC 204508 / S288c) (Baker's yeast), this protein is Serine/threonine-protein phosphatase 2B catalytic subunit A1 (CNA1).